The chain runs to 1005 residues: DNA polymerase (1005 aa).

The protein belongs to the DNA polymerase type-B family. As to quaternary structure, interacts with OPG148. Component of the Uracil-DNA glycosylase(UDG)-OPG148-polymerase complex; OPG148 and OPG116/UDG form a heterodimeric processivity factor that associates with OPG071 to form the processive polymerase holoenzyme.

The enzyme catalyses DNA(n) + a 2'-deoxyribonucleoside 5'-triphosphate = DNA(n+1) + diphosphate. Functionally, catalyzes DNA synthesis. Acquires processivity by associating with a heterodimeric processivity factor comprised of the viral OPG148 and OPG116 proteins, thereby forming the DNA polymerase holoenzyme. Displays 3'- to 5' exonuclease activity. Might participate in viral DNA recombination. Does not perform OPG116/D4synthesis across an abasic site. The sequence is that of DNA polymerase (OPG071) from Variola virus (isolate Human/India/Ind3/1967) (VARV).